Consider the following 276-residue polypeptide: MHWLEVVLLGVIQGLTEFLPVSSSGHLVLFQGLMGMEEPELLLDICLHVGTLAAVLWVFFAQILEAAKGFFRFCAAAPKGKAAMVQVWTTDQDARMALLIIIGTIPTGFIGMGFHKIADKLFASPVLAGAMLLITGALLWATRYVRTEGKLLPKVTWGNALTVGTIQGLAILPGISRSGSTICAALFLGVDREVAARYSFLLSIPAIVAALILEVADASAAAHPPVSMLLLGGIVSAFTGLAALKWLLAIVRKGSLWWFAPYCWLVGATVLVANFV.

8 consecutive transmembrane segments (helical) span residues 1–21, 41–61, 97–117, 121–141, 155–175, 200–220, 231–251, and 256–276; these read MHWL…FLPV, LLLD…VFFA, ALLI…FHKI, LFAS…LLWA, VTWG…LPGI, FLLS…DASA, LGGI…LAIV, and LWWF…ANFV.

It belongs to the UppP family.

It is found in the cell inner membrane. The catalysed reaction is di-trans,octa-cis-undecaprenyl diphosphate + H2O = di-trans,octa-cis-undecaprenyl phosphate + phosphate + H(+). In terms of biological role, catalyzes the dephosphorylation of undecaprenyl diphosphate (UPP). Confers resistance to bacitracin. This Desulfatibacillum aliphaticivorans protein is Undecaprenyl-diphosphatase.